The following is a 436-amino-acid chain: GTPase Der (436 aa).

EngA-type G domains lie at 4-167 (SVVA…PNES) and 176-351 (IYFS…ESHT). Residues 10–17 (GRPNVGKS), 57–61 (DTGGI), 119–122 (NKMD), 182–189 (GRPNVGKS), 229–233 (DTAGM), and 294–297 (NKWD) each bind GTP. The 85-residue stretch at 352-436 (KRIPTNVLND…PIKLFARRRQ (85 aa)) folds into the KH-like domain.

It belongs to the TRAFAC class TrmE-Era-EngA-EngB-Septin-like GTPase superfamily. EngA (Der) GTPase family. In terms of assembly, associates with the 50S ribosomal subunit.

GTPase that plays an essential role in the late steps of ribosome biogenesis. The chain is GTPase Der from Oceanobacillus iheyensis (strain DSM 14371 / CIP 107618 / JCM 11309 / KCTC 3954 / HTE831).